A 132-amino-acid chain; its full sequence is MSVNDPLGDMLTRIRNAQLRGKSTVSTPASRLRAWVLDVLQAEGYIRGYEKKETENGQGELVISLKYFEGTPVIRELKRVSKPGRRVYMATKDLPSVRNGLGVSIISTPKGVMSDASARSANVGGEVLCTVF.

Belongs to the universal ribosomal protein uS8 family. Part of the 30S ribosomal subunit. Contacts proteins S5 and S12.

Its function is as follows. One of the primary rRNA binding proteins, it binds directly to 16S rRNA central domain where it helps coordinate assembly of the platform of the 30S subunit. This is Small ribosomal subunit protein uS8 from Cereibacter sphaeroides (strain ATCC 17029 / ATH 2.4.9) (Rhodobacter sphaeroides).